Consider the following 186-residue polypeptide: Ribosome-recycling factor (186 aa).

It belongs to the RRF family.

Its subcellular location is the cytoplasm. In terms of biological role, responsible for the release of ribosomes from messenger RNA at the termination of protein biosynthesis. May increase the efficiency of translation by recycling ribosomes from one round of translation to another. The protein is Ribosome-recycling factor of Maricaulis maris (strain MCS10) (Caulobacter maris).